The sequence spans 233 residues: DNA repair protein RecO (233 aa).

It belongs to the RecO family.

Functionally, involved in DNA repair and RecF pathway recombination. In Pseudomonas paraeruginosa (strain DSM 24068 / PA7) (Pseudomonas aeruginosa (strain PA7)), this protein is DNA repair protein RecO.